A 332-amino-acid polypeptide reads, in one-letter code: MKVTFEQLKAAFNRVLISRGVDSETADACAEMFARTTESGVYSHGVNRFPRFIQQLENGDIIPDAQPKRITSLGAIEQWDAQRSIGNLTAKKMMDRAIELAADHGIGLVALRNANHWMRGGSYGWQAAEKGYIGICWTNSIAVMPPWGAKECRIGTNPLIVAIPSTPITMVDMSMSMFSYGMLEVNRLAGRQLPVDGGFDDEGNLTKEPGVIEKNRRILPMGYWKGSGMSIVLDMIATLLSDGASVAEVTEDNSDEYGISQIFIAIEVDKLIDGPTRDAKLQRIMDYVTSAERADENQSIRLPGHEFTTLLAENRRNGITVDDSVWAKIQAL.

The active-site Proton donor is the His44. NAD(+)-binding positions include 168–174 (ITMVDMS), 224–225 (WK), and 304–306 (GHE).

This sequence belongs to the LDH2/MDH2 oxidoreductase family. DlgD subfamily. In terms of assembly, homodimer.

Its subcellular location is the cytoplasm. The catalysed reaction is 3-dehydro-L-gulonate + NAD(+) = 2,3-dioxo-L-gulonate + NADH + H(+). The enzyme catalyses 3-dehydro-L-gulonate + NADP(+) = 2,3-dioxo-L-gulonate + NADPH + H(+). In terms of biological role, catalyzes the reduction of 2,3-diketo-L-gulonate in the presence of NADH, to form 3-keto-L-gulonate. The protein is 2,3-diketo-L-gulonate reductase of Escherichia coli O127:H6 (strain E2348/69 / EPEC).